The sequence spans 590 residues: Cytidine monophosphate-N-acetylneuraminic acid hydroxylase (590 aa).

One can recognise a Rieske domain in the interval 14–112 (LSPVEVANLK…VEMDENNGLL (99 aa)). 4 residues coordinate [2Fe-2S] cluster: Cys-54, His-56, Cys-75, and His-78.

It belongs to the CMP-Neu5Ac hydroxylase family. Requires [2Fe-2S] cluster as cofactor.

It localises to the cytoplasm. It catalyses the reaction CMP-N-acetyl-beta-neuraminate + 2 Fe(II)-[cytochrome b5] + O2 + 2 H(+) = CMP-N-glycoloyl-beta-neuraminate + 2 Fe(III)-[cytochrome b5] + H2O. It participates in amino-sugar metabolism; N-acetylneuraminate metabolism. Its function is as follows. Sialic acids are components of carbohydrate chains of glycoconjugates and are involved in cell-cell recognition and cell-pathogen interactions. Catalyzes the conversion of CMP-N-acetylneuraminic acid (CMP-Neu5Ac) into its hydroxylated derivative CMP-N-glycolylneuraminic acid (CMP-Neu5Gc), a sialic acid abundantly expressed at the surface of many cells. The polypeptide is Cytidine monophosphate-N-acetylneuraminic acid hydroxylase (CMAH) (Macaca mulatta (Rhesus macaque)).